The primary structure comprises 135 residues: Sex-regulated protein janus-A (135 aa).

Residue lysine 37 coordinates substrate. Histidine 63 acts as the Proton acceptor in catalysis. 104-106 (SQG) contacts substrate.

It belongs to the janus family.

Functionally, janA and janB regulate somatic sex differentiation. This is Sex-regulated protein janus-A (janA) from Drosophila yakuba (Fruit fly).